We begin with the raw amino-acid sequence, 177 residues long: Cytoglobin-1 (177 aa).

Residues 16-165 (PLTDKERVMI…LCCSIKAVYE (150 aa)) form the Globin domain. His79 and His111 together coordinate heme b.

It belongs to the globin family. As to quaternary structure, monomeric.

The protein localises to the cytoplasm. The protein resides in the nucleus. The enzyme catalyses Fe(II)-heme b-[protein] + nitric oxide + O2 = Fe(III)-heme b-[protein] + nitrate. It carries out the reaction Fe(III)-heme b-[protein] + nitric oxide + H2O = Fe(II)-heme b-[protein] + nitrite + 2 H(+). The catalysed reaction is 2 superoxide + 2 H(+) = H2O2 + O2. It catalyses the reaction H2O2 + AH2 = A + 2 H2O. Functionally, probable multifunctional globin with a hexacoordinated heme iron required for the catalysis of various reactions depending on redox condition of the cell as well as oxygen availability. Has a nitric oxide dioxygenase (NOD) activity and is most probably involved in cell-mediated and oxygen-dependent nitric oxide consumption. Under normoxic conditions functions as a nitric oxide dioxygenase (NOD) but under hypoxic conditions the globin may switch its function to that of a nitrite (NO2) reductase (NiR), generating nitric oxide. Could also have peroxidase and superoxide dismutase activities, detoxifying reactive oxygen species and protecting cells against oxidative stress. Also binds dioxygen with low affinity and could function as an oxygen sensor but has probably no function as a respiratory oxygen carrier. The chain is Cytoglobin-1 from Oryzias latipes (Japanese rice fish).